Consider the following 131-residue polypeptide: D-ribose pyranase (131 aa).

Catalysis depends on histidine 20, which acts as the Proton donor. Substrate contacts are provided by residues aspartate 28, histidine 98, and 120–122 (YSN).

Belongs to the RbsD / FucU family. RbsD subfamily. As to quaternary structure, homodecamer.

It is found in the cytoplasm. It catalyses the reaction beta-D-ribopyranose = beta-D-ribofuranose. Its pathway is carbohydrate metabolism; D-ribose degradation; D-ribose 5-phosphate from beta-D-ribopyranose: step 1/2. Catalyzes the interconversion of beta-pyran and beta-furan forms of D-ribose. The chain is D-ribose pyranase from Limosilactobacillus fermentum (strain NBRC 3956 / LMG 18251) (Lactobacillus fermentum).